We begin with the raw amino-acid sequence, 546 residues long: Cytochrome P450 monooxygenase alnH (546 aa).

The helical transmembrane segment at Val-11–Ile-31 threads the bilayer. Residues Asn-146, Asn-258, and Asn-425 are each glycosylated (N-linked (GlcNAc...) asparagine). Cys-445 contributes to the heme binding site.

This sequence belongs to the cytochrome P450 family. Heme is required as a cofactor.

It is found in the membrane. It functions in the pathway polyketide biosynthesis. Cytochrome P450 monooxygenase; part of the gene cluster that mediates the biosynthesis of asperlin, a polyketide showing anti-inflammatory, antitumor and antibiotic activities. The first step of the asperlin biosynthesis is the production of the intermediate 2,4,6-octatrienoic acid by the highly redusing polyketide synthase alnA with cleavage of the PKS product by the esterase alnB. 2,4,6-octatrienoic acid is further converted to asperlin via several steps involving the remaining enzymes from the cluster. This Emericella nidulans (strain FGSC A4 / ATCC 38163 / CBS 112.46 / NRRL 194 / M139) (Aspergillus nidulans) protein is Cytochrome P450 monooxygenase alnH.